Reading from the N-terminus, the 2764-residue chain is Teneurin-2 (2764 aa).

In terms of domain architecture, Teneurin N-terminal spans 1–375; that stretch reads MDVKDRRHRS…KPSKYCSWKC (375 aa). Over 1–379 the chain is Cytoplasmic; it reads MDVKDRRHRS…YCSWKCAALS (379 aa). 2 positions are modified to phosphoserine: S90 and S124. Residues 111–271 are disordered; it reads TGSDADSDTE…HHHSSANSLN (161 aa). Over residues 141–155 the composition is skewed to polar residues; sequence SSGLSSRENSALTLT. Residue T155 is modified to Phosphothreonine. S157 bears the Phosphoserine mark. The segment covering 159–168 has biased composition (basic and acidic residues); sequence NENKSDDDNG. The span at 174-188 shows a compositional bias: low complexity; that stretch reads TSSSSLLPSAQLPSS. Residues 202–211 show a composition bias toward polar residues; it reads DSNTSHQIMD. Low complexity predominate over residues 229–240; sequence SGPQQASSSGPP. Residues 380 to 400 form a helical membrane-spanning segment; it reads AIAAALLLAILLAYFIAMHLL. The Extracellular segment spans residues 401 to 2764; that stretch reads GLNWQLQPAD…FLRQNEMGKR (2364 aa). N-linked (GlcNAc...) asparagine glycans are attached at residues N443 and N482. 8 consecutive EGF-like domains span residues 575-603, 598-634, 636-668, 669-701, 702-735, 737-765, 768-796, and 798-831; these read DCPR…ADCA, LGAD…AECD, PMNQ…EHCE, EVDC…NCEL, ARVQ…PDCS, VCSV…AACD, VCHP…EHCT, and DGCP…PGCN. Cystine bridges form between C576-C586, C580-C591, C593-C602, C611-C622, C624-C633, C640-C651, C645-C656, C658-C667, C672-C683, C677-C688, C690-C699, C710-C723, C725-C734, C738-C748, C742-C753, C755-C764, C769-C779, C773-C784, C786-C795, C800-C810, C804-C819, and C821-C830. N-linked (GlcNAc...) asparagine glycosylation is found at N915, N938, and N1257. 5 NHL repeats span residues 1262–1306, 1332–1376, 1391–1442, 1464–1491, and 1520–1563; these read LELR…VKSL, ARCG…NGII, LSCD…IAGR, LESA…INRL, and CYSG…VSKN. The YD 1 repeat unit spans residues 1573 to 1592; that stretch reads YEAASPGEQELYVFNADGIH. The N-linked (GlcNAc...) asparagine glycan is linked to N1606. 3 YD repeats span residues 1609 to 1629, 1672 to 1691, and 1692 to 1714; these read YSAD…LKIR, YDGN…WTTF, and YDYD…TSLH. N1702, N1739, N1763, N1797, and N1882 each carry an N-linked (GlcNAc...) asparagine glycan. 18 YD repeats span residues 1885–1904, 1926–1944, 1945–1965, 1972–1989, 1990–2011, 2012–2029, 2032–2052, 2055–2075, 2083–2103, 2109–2126, 2127–2153, 2155–2168, 2169–2192, 2195–2215, 2216–2236, 2238–2258, 2270–2290, and 2292–2312; these read YFFN…ERTD, YLDK…YIFE, YDSS…HSMS, YIRN…VIFD, YSDD…VFYK, YGKL…TAVT, YDET…FSCT, YRKV…EGMI, YHDN…TPLP, YDEI…GVIY, YDIN…IKEV, YEMF…MTVQ, YDSM…TKYT, YDGD…WRYS, YDLN…LMPL, YDLR…DDDG, YNSK…SVQY, and YDGV…LQYF. The N-linked (GlcNAc...) asparagine glycan is linked to N1983. The N-linked (GlcNAc...) asparagine glycan is linked to N2187. A glycan (N-linked (GlcNAc...) asparagine) is linked at N2327. One copy of the YD 23 repeat lies at 2338–2379; sequence YDLQGHLFAMESSSGEEYYVASDNTGTPLAVYSINGLMIKQL. N-linked (GlcNAc...) asparagine glycosylation occurs at N2638.

Belongs to the tenascin family. Teneurin subfamily. Homodimer; disulfide-linked. Heterodimer with either TENM1 or TENM3. May also form heterodimer with TENM4. In terms of processing, derives from the membrane form by proteolytic processing. Post-translationally, derives from the plasma membrane form by proteolytic cleavage and translocates to the nucleus. Homophilic binding of the C-terminal extracellular domain stimulates its proteolytic cleavage and release in the cytoplasmic. Is subjected to rapid degradation by the proteasome pathway. As to expression, expressed in the cortex, CA1, CA2, CA3, dentate gyrus and granular layer of the hippocampus. Expressed in the Purkinje cells and molecular layer of the cerebellum.

Its subcellular location is the cell membrane. It is found in the presynaptic cell membrane. It localises to the postsynaptic cell membrane. The protein resides in the endoplasmic reticulum. The protein localises to the golgi apparatus. Its subcellular location is the synapse. It is found in the cell projection. It localises to the dendritic spine. The protein resides in the filopodium. The protein localises to the growth cone. Its subcellular location is the nucleus. It is found in the PML body. Functionally, involved in neural development, regulating the establishment of proper connectivity within the nervous system. Acts as a ligand of the ADGRL1 and ADGRL3 receptors that are expressed at the surface of adjacent cells. Promotes the formation of filopodia and enlarged growth cone in neuronal cells. Mediates axon guidance and homophilic and heterophilic cell-cell adhesion. May function as a cellular signal transducer. Induces gene transcription inhibition. This Mus musculus (Mouse) protein is Teneurin-2 (Tenm2).